A 415-amino-acid polypeptide reads, in one-letter code: Chorismate synthase (415 aa).

The tract at residues 43–72 is disordered; sequence EDLDRRKPGQSMITTSRGEPDKVSIKSGLQ. R48 serves as a coordination point for NADP(+). FMN-binding positions include 125-127, G304, 319-323, and R346; these read RSS and HAPVS. Residues 262 to 310 are disordered; the sequence is TDYTEDWEFGESEATASENASGDEPRARGDPKPVGNDHGGIQGGITTGD. The segment covering 298 to 307 has biased composition (gly residues); that stretch reads DHGGIQGGIT. The span at 379-393 shows a compositional bias: basic and acidic residues; it reads PDRLDDRPGEYDTDY. The disordered stretch occupies residues 379-415; it reads PDRLDDRPGEYDTDYHPSSPRNDPEDADTHATTVDED.

Belongs to the chorismate synthase family. FMNH2 serves as cofactor.

The enzyme catalyses 5-O-(1-carboxyvinyl)-3-phosphoshikimate = chorismate + phosphate. It functions in the pathway metabolic intermediate biosynthesis; chorismate biosynthesis; chorismate from D-erythrose 4-phosphate and phosphoenolpyruvate: step 7/7. Catalyzes the anti-1,4-elimination of the C-3 phosphate and the C-6 proR hydrogen from 5-enolpyruvylshikimate-3-phosphate (EPSP) to yield chorismate, which is the branch point compound that serves as the starting substrate for the three terminal pathways of aromatic amino acid biosynthesis. This reaction introduces a second double bond into the aromatic ring system. This Halomicrobium mukohataei (strain ATCC 700874 / DSM 12286 / JCM 9738 / NCIMB 13541) (Haloarcula mukohataei) protein is Chorismate synthase.